Here is a 132-residue protein sequence, read N- to C-terminus: Large ribosomal subunit protein uL14 (132 aa).

It belongs to the universal ribosomal protein uL14 family. Part of the 50S ribosomal subunit. Forms a cluster with proteins L3 and L24e, part of which may contact the 16S rRNA in 2 intersubunit bridges.

Binds to 23S rRNA. Forms part of two intersubunit bridges in the 70S ribosome. The protein is Large ribosomal subunit protein uL14 of Methanococcus maripaludis (strain DSM 14266 / JCM 13030 / NBRC 101832 / S2 / LL).